The sequence spans 203 residues: Urease accessory protein UreG (203 aa).

Position 11 to 18 (11 to 18 (GPVGSGKT)) interacts with GTP.

The protein belongs to the SIMIBI class G3E GTPase family. UreG subfamily. Homodimer. UreD, UreF and UreG form a complex that acts as a GTP-hydrolysis-dependent molecular chaperone, activating the urease apoprotein by helping to assemble the nickel containing metallocenter of UreC. The UreE protein probably delivers the nickel.

The protein resides in the cytoplasm. In terms of biological role, facilitates the functional incorporation of the urease nickel metallocenter. This process requires GTP hydrolysis, probably effectuated by UreG. The polypeptide is Urease accessory protein UreG (Prochlorococcus marinus (strain MIT 9301)).